Consider the following 241-residue polypeptide: MSTIPFSPKQKPDESTLTDRQRKVLDAIRTHIDEQGFAPSFREIGNAAGLKSPSSVKHQLQVLEDKGFIRMNANKGRAIEVVAGSAPNPEKPSQASEEATSTSNVAEIYQFPAEAIAESHDVPLVGRIAAGVPITAEQHVDDVMRLPERLTGSGTLFMLEVHGDSMVDAAICDGDYVVVREQNSAVNGDIVAALLDDEATVKTFRKENGHVWLMPHNPAYSPIDGTHATIMGKVVTVLRKL.

A DNA-binding region (H-T-H motif) is located at residues 41–61 (FREIGNAAGLKSPSSVKHQLQ). Residues Ser-165 and Lys-202 each act as for autocatalytic cleavage activity in the active site.

The protein belongs to the peptidase S24 family. Homodimer.

It catalyses the reaction Hydrolysis of Ala-|-Gly bond in repressor LexA.. Functionally, represses a number of genes involved in the response to DNA damage (SOS response), including recA and lexA. In the presence of single-stranded DNA, RecA interacts with LexA causing an autocatalytic cleavage which disrupts the DNA-binding part of LexA, leading to derepression of the SOS regulon and eventually DNA repair. This Bifidobacterium longum subsp. infantis (strain ATCC 15697 / DSM 20088 / JCM 1222 / NCTC 11817 / S12) protein is LexA repressor.